Here is a 267-residue protein sequence, read N- to C-terminus: 4-hydroxy-tetrahydrodipicolinate reductase (267 aa).

NAD(+) contacts are provided by residues 8–13 (GAAGRM) and Asp-34. Arg-35 contributes to the NADP(+) binding site. NAD(+) contacts are provided by residues 98–100 (GTT) and 122–125 (AANF). His-155 serves as the catalytic Proton donor/acceptor. His-156 lines the (S)-2,3,4,5-tetrahydrodipicolinate pocket. The Proton donor role is filled by Lys-159. 165-166 (GT) lines the (S)-2,3,4,5-tetrahydrodipicolinate pocket.

This sequence belongs to the DapB family.

It localises to the cytoplasm. The catalysed reaction is (S)-2,3,4,5-tetrahydrodipicolinate + NAD(+) + H2O = (2S,4S)-4-hydroxy-2,3,4,5-tetrahydrodipicolinate + NADH + H(+). It carries out the reaction (S)-2,3,4,5-tetrahydrodipicolinate + NADP(+) + H2O = (2S,4S)-4-hydroxy-2,3,4,5-tetrahydrodipicolinate + NADPH + H(+). The protein operates within amino-acid biosynthesis; L-lysine biosynthesis via DAP pathway; (S)-tetrahydrodipicolinate from L-aspartate: step 4/4. In terms of biological role, catalyzes the conversion of 4-hydroxy-tetrahydrodipicolinate (HTPA) to tetrahydrodipicolinate. In Pseudomonas putida (strain W619), this protein is 4-hydroxy-tetrahydrodipicolinate reductase.